The sequence spans 410 residues: MTISMISPSSIRLSSDKRDSSSSNLPANIEEDTQSVSSSDSGVSADSIDHHHHGHGHGHSHGGHGHSHTHNNDDSSSDCSGAGGGAHKHSHDEKYQKGRRAEKVLWAVAALSAVFIAAEFVGGFWAQSLAIMTDAGHMLSDLLSFIISIFAIRCARLPASKRLSFGYERAEVLGALTSVIILWVLTTVLVVVAIQRIVNNEHEVDADVMLITAGVGVLFNIVMGLVLHFGTGGHGHTHGGHSSHGHAHDGKNVNVRAALIHVIGDLVQSIGVLIAALIIRFTGWTLADPICTFLFSIIVLFTTVTVMRDIFFVLMEATPSHYDLSDVKKALSALEGVKGVHDLHLWSIGMDKTAFSVHLALESPNRAMENVAEARSLIRRRFGVAVATVQVEPFDEKIDSCDTCQQQETA.

Low complexity-rich tracts occupy residues 1–13 (MTISMISPSSIRL) and 35–46 (SVSSSDSGVSAD). Residues 1–94 (MTISMISPSS…GAHKHSHDEK (94 aa)) are disordered. The Cytoplasmic portion of the chain corresponds to 1-103 (MTISMISPSS…KYQKGRRAEK (103 aa)). Basic residues predominate over residues 50–69 (HHHHGHGHGHSHGGHGHSHT). A helical transmembrane segment spans residues 104–124 (VLWAVAALSAVFIAAEFVGGF). Residues 125–129 (WAQSL) are Extracellular-facing. The chain crosses the membrane as a helical span at residues 130-150 (AIMTDAGHMLSDLLSFIISIF). The Cytoplasmic segment spans residues 151-171 (AIRCARLPASKRLSFGYERAE). Residues 172–192 (VLGALTSVIILWVLTTVLVVV) traverse the membrane as a helical segment. The Extracellular segment spans residues 193 to 208 (AIQRIVNNEHEVDADV). A helical transmembrane segment spans residues 209–229 (MLITAGVGVLFNIVMGLVLHF). Over 230-258 (GTGGHGHTHGGHSSHGHAHDGKNVNVRAA) the chain is Cytoplasmic. A helical membrane pass occupies residues 259–279 (LIHVIGDLVQSIGVLIAALII). Position 280 (arginine 280) is a topological domain, extracellular. A helical transmembrane segment spans residues 281–301 (FTGWTLADPICTFLFSIIVLF). Residues 302-410 (TTVTVMRDIF…CDTCQQQETA (109 aa)) are Cytoplasmic-facing.

This sequence belongs to the cation diffusion facilitator (CDF) transporter (TC 2.A.4) family. SLC30A subfamily. As to expression, isoform a: Expressed in the hypodermis and the intestine. Isoform b: Expressed in the intestine, head neurons, seam cells, hypodermis, and the vulva.

The protein resides in the cytoplasmic vesicle membrane. It localises to the apical cell membrane. In terms of biological role, promotes excretion of zinc from intestinal cells into the intestinal lumen in response to increased dietary zinc. Involved in cadmium resistance, possibly by promoting its transport from cells. Involved in resistance to B.thuringiensis pore-forming toxin Cry5B downstream of the sek-1 and pmk-1 MAPK kinase pathway. The sequence is that of Zinc transporter ttm-1 from Caenorhabditis elegans.